A 675-amino-acid polypeptide reads, in one-letter code: MTTSYMNGHVTEESDSGIKNLDLASPEEYPKHREMAVDCPGDLGTRMMPVRRSAQLERIRQQQEDMRRRREEEGKKQELDLNSSMRLKKLAQIPPKTGIDNPIFDTEEGIVLESPHYAVNILDVEDLFSSLKHIQHTLVDSQSQEDISLLLQLVQNRDFQNAFKIHNAVTVHMSKASPPFPLIANVQDLVQEVQTVLKPVHQKEGQELTALLNAPHIQALLLAHDKVAEQEMQLEPITDERVYESIGHYGGETVKIVRIEKARDIPLGATVRNEMDSVIISRIVKGGAAEKSGLLHEGDEVLEINGIEIRGKDVNEVFDLLSDMHGTLTFVLIPSQQIKPPPAKETVIHVKAHFDYDPSDDPYVPCRELGLSFQKGDILHVISQEDPNWWQAYREGDEDNQPLAGLVPGKSFQQQREAMKQTIEEDKEPEKSGKLWCAKKNKKKRKKVLYNANKNDDYDNEEILTYEEMSLYHQPANRKRPIILIGPQNCGQNELRQRLMNKEKDRFASAVPHTTRNRRDHEVAGRDYHFVSRQAFEADIAAGKFIEHGEFEKNLYGTSIDSVRQVINSGKICLLSLRTQSLKTLRNSDLKPYIIFIAPPSQERLRALLAKEGKNPKPEELREIIEKTREMEQNNGHYFDTAIVNSDLDKAYQELLRLINKLDTEPQWVPSTWLR.

The interval 1 to 345 is required for the correct localization of PALS1 and PATJ at cell-cell contacts and the normal formation of tight junctions and adherens junctions; that stretch reads MTTSYMNGHV…QQIKPPPAKE (345 aa). 2 positions are modified to phosphoserine: serine 14 and serine 25. Positions 21–140 are interaction with PARD6B; it reads LDLASPEEYP…LKHIQHTLVD (120 aa). Residues 51-79 are disordered; it reads RRSAQLERIRQQQEDMRRRREEEGKKQEL. Over residues 54 to 79 the composition is skewed to basic and acidic residues; it reads AQLERIRQQQEDMRRRREEEGKKQEL. Phosphoserine is present on residues serine 83 and serine 84. L27 domains are found at residues 120 to 177 and 179 to 235; these read NILD…SKAS and PFPL…MQLE. An interaction with LIN7C region spans residues 181–243; the sequence is PLIANVQDLV…LEPITDERVY (63 aa). The PDZ domain occupies 256–336; it reads IVRIEKARDI…TLTFVLIPSQ (81 aa). The SH3 domain occupies 345–417; that stretch reads ETVIHVKAHF…PGKSFQQQRE (73 aa). Residues 479–660 form the Guanylate kinase-like domain; that stretch reads KRPIILIGPQ…AYQELLRLIN (182 aa). 486 to 493 is a binding site for ATP; it reads GPQNCGQN.

The protein belongs to the MAGUK family. In terms of assembly, heterodimer with MPP1. Forms a heterotrimeric complex composed of PALS1, LIN7B and PATJ; the N-terminal L27 domain of PALS1 interacts with the L27 domain of PATJ and the C-terminal L27 domain of PALS1 interacts with the L27 domain of LIN7B. Component of a complex composed of PALS1, CRB1 and MPP4. Component of a complex whose core is composed of ARHGAP17, AMOT, PALS1, PATJ and PARD3/PAR3. Component of a complex composed of PALS1, CRB1 and EPB41L5. Within the complex, interacts (via HOOK domain) with EPB41L5 (via FERM domain), and interacts with CRB1 (via intracellular domain). Component of a complex composed of PALS1, MPP3 and CRB1; PALS1 acts as a bridging protein between MPP3 (via guanylate kinase-like domain) and CRB1. Component of a complex composed of CRB3, PALS1 and PATJ. As part of the Crumbs complex; interacts with WWP1, the interaction is enhanced by AMOTL2 and facilitates WWP1 localization to the plasma membrane. The Crumbs complex promotes monoubiquitination of AMOTL2 by WWP1, which activates the Hippo signaling pathway. Interacts (via PDZ domain) with PATJ (via N-terminus). Interacts with EZR. Interacts (via PDZ domain) with CRB1 (via C-terminal ERLI motif). While the PDZ domain is sufficient for interaction with CRB1, the adjacent SH3 and guanylate kinase-like domains are likely to contribute to a high affinity interaction. Interacts with WWTR1/TAZ (via WW domain). Interacts with MPP7. Interacts (via PDZ domain) with CRB3 (via C-terminus). Interacts with LIN7C. Interacts with MPDZ. Interacts with PARD6B. Interacts with SC6A1. Interacts with CDH5; the interaction promotes PALS1 localization to cell junctions and is required for CDH5-mediated vascular lumen formation and endothelial cell. Interacts with NPHP1 (via coiled coil and SH3 domains). Interacts with NPHP4. Interacts with CRB2. As to expression, expressed in the retinal pigment epithelium (at protein level). Expressed in the vascular plexus of the retina (at protein level). In the brain, expressed in the dentate gyrus of hippocampus, striatum and cerebellum (at protein level). Expressed in the sciatic nerve (at protein level). Expressed in the kidney nephron (at protein level). Expressed in the lung, and heart. Expressed in placenta, brain, skeletal muscles, pancreas and liver.

It is found in the golgi apparatus. The protein localises to the cell membrane. Its subcellular location is the endomembrane system. It localises to the cell junction. The protein resides in the tight junction. It is found in the adherens junction. The protein localises to the cell projection. Its subcellular location is the axon. It localises to the perikaryon. The protein resides in the apical cell membrane. Its function is as follows. Plays a role in tight junction biogenesis and in the establishment of cell polarity in epithelial cells. Also involved in adherens junction biogenesis by ensuring correct localization of the exocyst complex protein EXOC4/SEC8 which allows trafficking of adherens junction structural component CDH1 to the cell surface. Plays a role through its interaction with CDH5 in vascular lumen formation and endothelial membrane polarity. Required during embryonic and postnatal retinal development. Required for the maintenance of cerebellar progenitor cells in an undifferentiated proliferative state, preventing premature differentiation, and is required for cerebellar histogenesis, fissure formation, cerebellar layer organization and cortical development. Plays a role in neuronal progenitor cell survival, potentially via promotion of mTOR signaling. Plays a role in the radial and longitudinal extension of the myelin sheath in Schwann cells. May modulate SC6A1/GAT1-mediated GABA uptake by stabilizing the transporter. May play a role in the T-cell receptor-mediated activation of NF-kappa-B. Required for localization of EZR to the apical membrane of parietal cells and may play a role in the dynamic remodeling of the apical cytoskeleton. Required for the normal polarized localization of the vesicular marker STX4. Required for the correct trafficking of the myelin proteins PMP22 and MAG. Involved in promoting phosphorylation and cytoplasmic retention of transcriptional coactivators YAP1 and WWTR1/TAZ which leads to suppression of TGFB1-dependent transcription of target genes such as CCN2/CTGF, SERPINE1/PAI1, SNAI1/SNAIL1 and SMAD7. This chain is Protein PALS1, found in Mus musculus (Mouse).